We begin with the raw amino-acid sequence, 273 residues long: Ribosomal RNA small subunit methyltransferase I (273 aa).

Belongs to the methyltransferase superfamily. RsmI family.

It is found in the cytoplasm. It carries out the reaction cytidine(1402) in 16S rRNA + S-adenosyl-L-methionine = 2'-O-methylcytidine(1402) in 16S rRNA + S-adenosyl-L-homocysteine + H(+). Its function is as follows. Catalyzes the 2'-O-methylation of the ribose of cytidine 1402 (C1402) in 16S rRNA. This Xylella fastidiosa (strain Temecula1 / ATCC 700964) protein is Ribosomal RNA small subunit methyltransferase I.